The following is a 247-amino-acid chain: Cell division protein ZapD (247 aa).

It belongs to the ZapD family. As to quaternary structure, interacts with FtsZ.

The protein resides in the cytoplasm. Its function is as follows. Cell division factor that enhances FtsZ-ring assembly. Directly interacts with FtsZ and promotes bundling of FtsZ protofilaments, with a reduction in FtsZ GTPase activity. This Shigella sonnei (strain Ss046) protein is Cell division protein ZapD.